We begin with the raw amino-acid sequence, 177 residues long: Transcription antitermination protein NusB (177 aa).

Positions 1-36 are disordered; that stretch reads MTEQPTKPTGSRPPRQPRTGLTSTGARKAGSKSDRS.

It belongs to the NusB family.

Functionally, involved in transcription antitermination. Required for transcription of ribosomal RNA (rRNA) genes. Binds specifically to the boxA antiterminator sequence of the ribosomal RNA (rrn) operons. This is Transcription antitermination protein NusB from Albidiferax ferrireducens (strain ATCC BAA-621 / DSM 15236 / T118) (Rhodoferax ferrireducens).